Reading from the N-terminus, the 122-residue chain is Large ribosomal subunit protein uL14 (122 aa).

The protein belongs to the universal ribosomal protein uL14 family. As to quaternary structure, part of the 50S ribosomal subunit. Forms a cluster with proteins L3 and L19. In the 70S ribosome, L14 and L19 interact and together make contacts with the 16S rRNA in bridges B5 and B8.

Functionally, binds to 23S rRNA. Forms part of two intersubunit bridges in the 70S ribosome. This Francisella philomiragia subsp. philomiragia (strain ATCC 25017 / CCUG 19701 / FSC 153 / O#319-036) protein is Large ribosomal subunit protein uL14.